The chain runs to 125 residues: uncharacterized protein (125 aa).

This is an uncharacterized protein from Saccharomyces cerevisiae (strain ATCC 204508 / S288c) (Baker's yeast).